A 303-amino-acid polypeptide reads, in one-letter code: Ribose-5-phosphate isomerase (303 aa).

Residues 22–33 (AGGAASGGGGNN) show a composition bias toward gly residues. The disordered stretch occupies residues 22–75 (AGGAASGGGGNNWGLSGSHVQLPGRAHSETRGDKGGSSAGGPAPSTMSKAEEAK). Arginine 52 is subject to Omega-N-methylarginine. Serine 99 is modified (phosphoserine).

It belongs to the ribose 5-phosphate isomerase family. Widely expressed, with highest levels in testis.

It catalyses the reaction aldehydo-D-ribose 5-phosphate = D-ribulose 5-phosphate. It participates in carbohydrate degradation; pentose phosphate pathway; D-ribose 5-phosphate from D-ribulose 5-phosphate (non-oxidative stage): step 1/1. The sequence is that of Ribose-5-phosphate isomerase (Rpia) from Mus musculus (Mouse).